Here is a 349-residue protein sequence, read N- to C-terminus: Fructose-1,6-bisphosphatase class 1 (349 aa).

4 residues coordinate Mg(2+): Glu-113, Asp-135, Ile-137, and Asp-138. Substrate contacts are provided by residues 138–141, Asn-230, Tyr-258, and Lys-288; that span reads DGSS. Glu-294 lines the Mg(2+) pocket.

It belongs to the FBPase class 1 family. As to quaternary structure, homotetramer. The cofactor is Mg(2+).

The protein localises to the cytoplasm. The catalysed reaction is beta-D-fructose 1,6-bisphosphate + H2O = beta-D-fructose 6-phosphate + phosphate. It functions in the pathway carbohydrate biosynthesis; Calvin cycle. This chain is Fructose-1,6-bisphosphatase class 1, found in Nostoc punctiforme (strain ATCC 29133 / PCC 73102).